Here is a 331-residue protein sequence, read N- to C-terminus: Probable endo-beta-1,4-glucanase B (331 aa).

The N-terminal stretch at 1–18 (MKFQSTLLLAAAAGSALA) is a signal peptide. N-linked (GlcNAc...) asparagine glycans are attached at residues N38 and N100. Catalysis depends on E160, which acts as the Proton donor. N-linked (GlcNAc...) asparagine glycosylation is present at N211. The active-site Nucleophile is the E266. An N-linked (GlcNAc...) asparagine glycan is attached at N288.

This sequence belongs to the glycosyl hydrolase 5 (cellulase A) family.

The protein resides in the secreted. The enzyme catalyses Endohydrolysis of (1-&gt;4)-beta-D-glucosidic linkages in cellulose, lichenin and cereal beta-D-glucans.. Has endoglucanase activity on substrates containing beta-1,4 glycosidic bonds, like in carboxymethylcellulose (CMC), hydroxyethylcellulose (HEC) and beta-glucan. Involved in the degradation of complex natural cellulosic substrates. The protein is Probable endo-beta-1,4-glucanase B (eglB) of Aspergillus niger (strain ATCC MYA-4892 / CBS 513.88 / FGSC A1513).